A 321-amino-acid chain; its full sequence is ATP-dependent 6-phosphofructokinase (321 aa).

G11 is an ATP binding site. ADP is bound at residue 21–25 (RAVVR). ATP contacts are provided by residues 72–73 (RC) and 102–105 (GDGS). Mg(2+) is bound at residue D103. Residue 126-128 (TID) participates in substrate binding. D128 (proton acceptor) is an active-site residue. R155 contributes to the ADP binding site. Residues R163 and 170-172 (MGR) each bind substrate. Residues 186-188 (GAE), R212, and 214-216 (KLH) each bind ADP. Residues E223, R245, and 251 to 254 (HIQR) each bind substrate.

It belongs to the phosphofructokinase type A (PFKA) family. ATP-dependent PFK group I subfamily. Prokaryotic clade 'B1' sub-subfamily. In terms of assembly, homotetramer. It depends on Mg(2+) as a cofactor.

Its subcellular location is the cytoplasm. The enzyme catalyses beta-D-fructose 6-phosphate + ATP = beta-D-fructose 1,6-bisphosphate + ADP + H(+). The protein operates within carbohydrate degradation; glycolysis; D-glyceraldehyde 3-phosphate and glycerone phosphate from D-glucose: step 3/4. With respect to regulation, allosterically activated by ADP and other diphosphonucleosides, and allosterically inhibited by phosphoenolpyruvate. In terms of biological role, catalyzes the phosphorylation of D-fructose 6-phosphate to fructose 1,6-bisphosphate by ATP, the first committing step of glycolysis. The polypeptide is ATP-dependent 6-phosphofructokinase (Caldanaerobacter subterraneus subsp. tengcongensis (strain DSM 15242 / JCM 11007 / NBRC 100824 / MB4) (Thermoanaerobacter tengcongensis)).